Reading from the N-terminus, the 132-residue chain is NADPH-dependent 7-cyano-7-deazaguanine reductase (132 aa).

The Thioimide intermediate role is filled by C48. The active-site Proton donor is D55. Residues 70-72 and 89-90 contribute to the substrate site; these read LEL and ME.

This sequence belongs to the GTP cyclohydrolase I family. QueF type 1 subfamily.

It is found in the cytoplasm. The enzyme catalyses 7-aminomethyl-7-carbaguanine + 2 NADP(+) = 7-cyano-7-deazaguanine + 2 NADPH + 3 H(+). It functions in the pathway tRNA modification; tRNA-queuosine biosynthesis. Catalyzes the NADPH-dependent reduction of 7-cyano-7-deazaguanine (preQ0) to 7-aminomethyl-7-deazaguanine (preQ1). This is NADPH-dependent 7-cyano-7-deazaguanine reductase from Elusimicrobium minutum (strain Pei191).